A 635-amino-acid polypeptide reads, in one-letter code: Probable serine/threonine-protein kinase DDB_G0270146 (635 aa).

Residues 77–329 enclose the Protein kinase domain; the sequence is VISDIAIGKG…AKELLSHPWI (253 aa). Residues 83–91 and lysine 106 each bind ATP; that span reads IGKGAFATV. Aspartate 199 serves as the catalytic Proton acceptor. Residues 360–392 are compositionally biased toward low complexity; that stretch reads SLLSNSSGGDDSVTDSDLSISNQSSRSSSFLLD. Residues 360–405 are disordered; that stretch reads SLLSNSSGGDDSVTDSDLSISNQSSRSSSFLLDDGGGGGGSKNHTV. 2 coiled-coil regions span residues 417 to 456 and 536 to 585; these read IEFN…KYRE and KKAL…KDSS. The span at 540 to 582 shows a compositional bias: basic and acidic residues; that stretch reads EAQKRREKEQEKLKEQEKLKEKKKEKDIKKEKDKKDKKDKQLK. Residues 540–635 are disordered; that stretch reads EAQKRREKEQ…GRSSSKIFNE (96 aa). The segment covering 583 to 598 has biased composition (low complexity); the sequence is DSSSSTTTTNSTPSTP. A compositionally biased stretch (polar residues) spans 626 to 635; sequence GRSSSKIFNE.

The protein belongs to the protein kinase superfamily. STE Ser/Thr protein kinase family. Mg(2+) is required as a cofactor.

The catalysed reaction is L-seryl-[protein] + ATP = O-phospho-L-seryl-[protein] + ADP + H(+). It carries out the reaction L-threonyl-[protein] + ATP = O-phospho-L-threonyl-[protein] + ADP + H(+). The sequence is that of Probable serine/threonine-protein kinase DDB_G0270146 from Dictyostelium discoideum (Social amoeba).